We begin with the raw amino-acid sequence, 298 residues long: Cobalt-precorrin-5B C(1)-methyltransferase (298 aa).

The protein belongs to the CbiD family.

The catalysed reaction is Co-precorrin-5B + S-adenosyl-L-methionine = Co-precorrin-6A + S-adenosyl-L-homocysteine. It participates in cofactor biosynthesis; adenosylcobalamin biosynthesis; cob(II)yrinate a,c-diamide from sirohydrochlorin (anaerobic route): step 6/10. Its function is as follows. Catalyzes the methylation of C-1 in cobalt-precorrin-5B to form cobalt-precorrin-6A. The sequence is that of Cobalt-precorrin-5B C(1)-methyltransferase from Archaeoglobus fulgidus (strain ATCC 49558 / DSM 4304 / JCM 9628 / NBRC 100126 / VC-16).